Here is a 473-residue protein sequence, read N- to C-terminus: MSTDTSIKAGIDSIRAKADDLHLAEDSSNGTQANLDKHQIKATTAVGQDNGNNAGVADHKNDKNNKNNKNNNDDDDDDEDDDVAAAAAAVGDAGSDKKKKKKKSSNKKKKKKLVSIDQSYPDGVFPEGEWQEYGLDSNKYRTTSEEMRYLDRQQNNKWEDFRKGAEIHRRVRAKAKSSIRPGMTMIEIADLIENSVRAYASADHTLKAGIGFPTGLSLNHVAAHYTPNTGDKLTLGKDDLMKVDIGVHVNGRICDSAFTMTFNEDGKYDSIMQAVKEATNTGVKEAGIDVRLNDIGAAVQEVMESYEMELDGKTYPIKCIKNLNGHNIGDFIIHSGKTVPIVANGDMTKMEEGETFAIETFGSTGNGYVLPEGECSHYALNSGVESIKPPSDKAKHLLNTIQSNFGTLPWCRRYLERTGEEKYLFALNQLVKAGIVEDYPPIVDKRGSYTAQFEHTILLHPHKKEVVTRGDDY.

A disordered region spans residues 23–121 (LAEDSSNGTQ…KLVSIDQSYP (99 aa)). Residues 41–53 (KATTAVGQDNGNN) are compositionally biased toward polar residues. Residues 73–83 (DDDDDDEDDDV) show a composition bias toward acidic residues. Positions 84-93 (AAAAAAVGDA) are enriched in low complexity. Residues 97 to 113 (KKKKKKKSSNKKKKKKL) show a composition bias toward basic residues. Substrate is bound at residue His-224. 3 residues coordinate a divalent metal cation: Asp-244, Asp-255, and His-326. His-334 is a binding site for substrate. Residues Glu-359 and Glu-454 each contribute to the a divalent metal cation site.

It belongs to the peptidase M24A family. Methionine aminopeptidase eukaryotic type 2 subfamily. It depends on Co(2+) as a cofactor. Requires Zn(2+) as cofactor. Mn(2+) is required as a cofactor. Fe(2+) serves as cofactor.

It is found in the cytoplasm. It carries out the reaction Release of N-terminal amino acids, preferentially methionine, from peptides and arylamides.. Its function is as follows. Cotranslationally removes the N-terminal methionine from nascent proteins. The N-terminal methionine is often cleaved when the second residue in the primary sequence is small and uncharged (Met-Ala-, Cys, Gly, Pro, Ser, Thr, or Val). This chain is Methionine aminopeptidase 2, found in Lodderomyces elongisporus (strain ATCC 11503 / CBS 2605 / JCM 1781 / NBRC 1676 / NRRL YB-4239) (Yeast).